Reading from the N-terminus, the 139-residue chain is Drosulfakinins (139 aa).

A signal peptide spans 1 to 35; it reads MGHRGMGCAHFATMAMPLWALTFYLLVVLPVPSQT. Positions 36-71 are excised as a propeptide; it reads ASVEVGKEERRLQDLDPKMGSEAGNTDGLSLARFGS. Phenylalanine 80 is subject to Phenylalanine amide. Residues 81–109 constitute a propeptide that is removed on maturation; the sequence is GHRVPIISRPVIPIELDLLMDNEDDRTMS. Tyrosine 115 is modified (sulfotyrosine). Phenylalanine 120 bears the Phenylalanine amide mark. Tyrosine 132 is subject to Sulfotyrosine. Phenylalanine 137 carries the phenylalanine amide modification.

The protein belongs to the gastrin/cholecystokinin family.

It localises to the secreted. In terms of biological role, drosulfakinin-0 (DSK 0) plays diverse biological roles including regulating gut muscle contraction in adults but not in larvae. This Drosophila pseudoobscura pseudoobscura (Fruit fly) protein is Drosulfakinins.